A 778-amino-acid polypeptide reads, in one-letter code: Preaspterpenacid I synthase sttA (778 aa).

Positions 4–359 are sesterterpenoid synthase; it reads ISDVMKHCVP…RYHRTDLATT (356 aa). A Mg(2+)-binding site is contributed by Asp-105. Asp-105 provides a ligand contact to substrate. The tract at residues 211-214 is substrate; that stretch reads RVNE. Asn-255 serves as a coordination point for substrate. Substrate regions lie at residues 259 to 263 and 350 to 351; these read SFPKE and RY. The interval 360–774 is geranylfarneyl diphosphate synthase; sequence AEDRATLIGK…RMMLLGMGPK (415 aa). The tract at residues 423-445 is disordered; sequence AFKKSNPRNGKQNGTEGSKGTFT. The segment covering 429 to 445 has biased composition (polar residues); it reads PRNGKQNGTEGSKGTFT. Positions 493, 496, and 525 each coordinate isopentenyl diphosphate. Positions 532 and 536 each coordinate Mg(2+). Arg-541 serves as a coordination point for dimethylallyl diphosphate. Arg-542 is a binding site for isopentenyl diphosphate. Positions 619, 620, 657, 664, and 674 each coordinate dimethylallyl diphosphate.

This sequence in the N-terminal section; belongs to the terpene synthase family. The protein in the C-terminal section; belongs to the FPP/GGPP synthase family.

The enzyme catalyses 4 isopentenyl diphosphate + dimethylallyl diphosphate = (2E,6E,10E,14E)-geranylfarnesyl diphosphate + 4 diphosphate. The catalysed reaction is (2E,6E,10E,14E)-geranylfarnesyl diphosphate + H2O = preaspterpenacid acid I + diphosphate. It functions in the pathway secondary metabolite biosynthesis; terpenoid biosynthesis. Functionally, sesterterpenoid synthase; part of the gene cluster that mediates the biosynthesis of aspterpenacids. Performs both prenyl transferase and terpene cyclase activity, converting isopentenyl diphosphate and dimethylallyl diphosphate into geranylfarnesyl diphosphate (GFPP) and then converting GFPP into preaspterpenacid I. C22-oxidative modification of preaspterpenacid I by the cytochrome P450 monooxygenase sttB then leads to preaspterpenacid II. It has still to be determined how preaspterpenacid II is further modified to produce aspterpenacids. The polypeptide is Preaspterpenacid I synthase sttA (Aspergillus terreus).